A 356-amino-acid polypeptide reads, in one-letter code: MTVPSLLLAGGRWRCFPLPLASSLFQALHNSCCRKESTAPKKIIPHIDFSDETAKESGKTLDKLFSSEQQASILHVLNTASNKELEAFKLLRGKKSFNIVEHRKKFGPFQNLESLMNVPLFQYKITIQVCNSILNPETGGKKKKLQESRLLRKLIKPEIGRERVKAVNSIVSIVSGTRRIAWAHLDRKLAVLDWQQTEYCQLMKGSYLSSVYLEEISSIISKMPKADFYVLEKAGPSFQNPSLFPVLLHFHMTEAMLYALLNTTFAQDGHHQVLSMNRNAVGKHFELMIGDTRTSGKEVVKQLLSESVLKDEPRVFFPPEKIVRYRQMFSSTEHNRVEELYDSLLQAIAFYELAVF.

The N-terminal 35 residues, 1-35 (MTVPSLLLAGGRWRCFPLPLASSLFQALHNSCCRK), are a transit peptide targeting the mitochondrion.

The protein belongs to the TEFM family. In terms of assembly, interacts with POLRMT.

The protein localises to the mitochondrion matrix. It localises to the mitochondrion nucleoid. Its function is as follows. Transcription elongation factor which increases mitochondrial RNA polymerase processivity. Regulates transcription of the mitochondrial genome, including genes important for the oxidative phosphorylation machinery. This is Transcription elongation factor, mitochondrial (TEFM) from Bos taurus (Bovine).